The sequence spans 360 residues: DNA replication and repair protein RecF (360 aa).

30–37 is an ATP binding site; the sequence is GQNGSGKT.

This sequence belongs to the RecF family.

Its subcellular location is the cytoplasm. In terms of biological role, the RecF protein is involved in DNA metabolism; it is required for DNA replication and normal SOS inducibility. RecF binds preferentially to single-stranded, linear DNA. It also seems to bind ATP. This chain is DNA replication and repair protein RecF, found in Shewanella baltica (strain OS185).